The sequence spans 364 residues: tRNA-specific 2-thiouridylase MnmA (364 aa).

ATP contacts are provided by residues 6-13 (AMSGGVDS) and leucine 32. The Nucleophile role is filled by cysteine 101. The cysteines at positions 101 and 193 are disulfide-linked. Glycine 125 is an ATP binding site. The interval 143 to 145 (KDQ) is interaction with tRNA. The active-site Cysteine persulfide intermediate is the cysteine 193.

The protein belongs to the MnmA/TRMU family.

The protein resides in the cytoplasm. It carries out the reaction S-sulfanyl-L-cysteinyl-[protein] + uridine(34) in tRNA + AH2 + ATP = 2-thiouridine(34) in tRNA + L-cysteinyl-[protein] + A + AMP + diphosphate + H(+). Functionally, catalyzes the 2-thiolation of uridine at the wobble position (U34) of tRNA, leading to the formation of s(2)U34. This is tRNA-specific 2-thiouridylase MnmA from Rhodococcus jostii (strain RHA1).